The sequence spans 458 residues: Phenylalanine-specific permease (458 aa).

The Cytoplasmic portion of the chain corresponds to 1 to 27 (MKNASTVSEDTASNQEPTLHRGLHNRH). The chain crosses the membrane as a helical span at residues 28-48 (IQLIALGGAIGTGLFLGIGPA). Topologically, residues 49 to 50 (IQ) are periplasmic. A helical membrane pass occupies residues 51-71 (MAGPAVLLGYGVAGIIAFLIM). Over 72 to 105 (RQLGEMVVEEPVSGSFAHFAYKYWGPFAGFLSGW) the chain is Cytoplasmic. A helical membrane pass occupies residues 106–126 (NYWVMFVLVGMAELTAAGIYM). Topologically, residues 127-132 (QYWFPD) are periplasmic. The helical transmembrane segment at 133–153 (VPTWIWAAAFFIIINAVNLVN) threads the bilayer. Residues 154–160 (VRLYGET) lie on the Cytoplasmic side of the membrane. A helical transmembrane segment spans residues 161 to 181 (EFWFALIKVLAIIGMIGFGLW). Topologically, residues 182-196 (LLFSGHGGEKASIDN) are periplasmic. A helical transmembrane segment spans residues 197–217 (LWRYGGFFATGWNGLILSLAV). Residues 218-250 (IMFSFGGLELIGITAAEARDPEKSIPKAVNQVV) lie on the Cytoplasmic side of the membrane. A helical membrane pass occupies residues 251–271 (YRILLFYIGSLVVLLALYPWV). At 272–288 (EVKSNSSPFVMIFHNLD) the chain is on the periplasmic side. Residues 289–309 (SNVVASALNFVILVASLSVYN) form a helical membrane-spanning segment. At 310 to 341 (SGVYSNSRMLFGLSVQGNAPKFLTRVSRRGVP) the chain is on the cytoplasmic side. The helical transmembrane segment at 342–362 (INSLMLSGAITSLVVLINYLL) threads the bilayer. Over 363–367 (PQKAF) the chain is Periplasmic. A helical transmembrane segment spans residues 368–388 (GLLMALVVATLLLNWIMICLA). Over 389–411 (HLRFRAAMRRQGRETQFKALLYP) the chain is Cytoplasmic. The chain crosses the membrane as a helical span at residues 412 to 432 (FGNYLCIAFLGMILLLMCTMD). Residues 433-434 (DM) are Periplasmic-facing. A helical transmembrane segment spans residues 435–455 (RLSAILLPVWIVFLFMAFKTL). The Cytoplasmic segment spans residues 456–458 (RRK).

It belongs to the amino acid-polyamine-organocation (APC) superfamily. Amino acid transporter (AAT) (TC 2.A.3.1) family.

The protein localises to the cell inner membrane. The enzyme catalyses L-phenylalanine(in) + H(+)(in) = L-phenylalanine(out) + H(+)(out). In terms of biological role, permease that is involved in the active transport across the cytoplasmic membrane of phenylalanine. Can also transport tyrosine, but not tryptophan. The polypeptide is Phenylalanine-specific permease (Escherichia coli (strain K12)).